Consider the following 184-residue polypeptide: Outer-membrane lipoprotein carrier protein (184 aa).

A signal peptide spans 1–19 (MRAFLKILMVLIFMSVAYA).

Belongs to the LolA family. As to quaternary structure, monomer.

The protein localises to the periplasm. Functionally, participates in the translocation of lipoproteins from the inner membrane to the outer membrane. Only forms a complex with a lipoprotein if the residue after the N-terminal Cys is not an aspartate (The Asp acts as a targeting signal to indicate that the lipoprotein should stay in the inner membrane). The polypeptide is Outer-membrane lipoprotein carrier protein (Helicobacter pylori (strain HPAG1)).